Here is a 78-residue protein sequence, read N- to C-terminus: MKNLLLTFLVVTIVCLDLGYTLICHQVHGLQTCEPAQKFCQIRTTMFFPNHPVLLMGCTYNCPTERYSVCCSTDKCNK.

The N-terminal stretch at 1-21 (MKNLLLTFLVVTIVCLDLGYT) is a signal peptide. Intrachain disulfides connect C24/C40, C33/C58, C62/C70, and C71/C76.

This sequence belongs to the three-finger toxin family. Short-chain subfamily. As to expression, expressed by the venom gland.

It localises to the secreted. In terms of biological role, this three-finger toxin binds and inhibits the nicotinic acetylcholine receptor (nAChR). The sequence is that of Short neurotoxin OH-46 from Ophiophagus hannah (King cobra).